The chain runs to 246 residues: Octanoyltransferase (246 aa).

The BPL/LPL catalytic domain occupies 50–231 (PDTDDEIWVV…RLIAHLDGAT (182 aa)). Residues 90–97 (RGGQITYH), 162–164 (ALG), and 175–177 (GLS) contribute to the substrate site. Cysteine 193 (acyl-thioester intermediate) is an active-site residue.

Belongs to the LipB family.

Its subcellular location is the cytoplasm. The catalysed reaction is octanoyl-[ACP] + L-lysyl-[protein] = N(6)-octanoyl-L-lysyl-[protein] + holo-[ACP] + H(+). The protein operates within protein modification; protein lipoylation via endogenous pathway; protein N(6)-(lipoyl)lysine from octanoyl-[acyl-carrier-protein]: step 1/2. Functionally, catalyzes the transfer of endogenously produced octanoic acid from octanoyl-acyl-carrier-protein onto the lipoyl domains of lipoate-dependent enzymes. Lipoyl-ACP can also act as a substrate although octanoyl-ACP is likely to be the physiological substrate. This is Octanoyltransferase from Burkholderia pseudomallei (strain 1106a).